Consider the following 470-residue polypeptide: Argininosuccinate lyase (470 aa).

Belongs to the lyase 1 family. Argininosuccinate lyase subfamily.

The protein resides in the cytoplasm. It catalyses the reaction 2-(N(omega)-L-arginino)succinate = fumarate + L-arginine. The protein operates within amino-acid biosynthesis; L-arginine biosynthesis; L-arginine from L-ornithine and carbamoyl phosphate: step 3/3. The polypeptide is Argininosuccinate lyase (Synechococcus sp. (strain WH7803)).